Here is an 85-residue protein sequence, read N- to C-terminus: RNA-binding protein Hfq (85 aa).

The 61-residue stretch at 9 to 69 folds into the Sm domain; sequence DQLLNTARKD…ISTIIPAKII (61 aa).

It belongs to the Hfq family. In terms of assembly, homohexamer.

Its function is as follows. RNA chaperone that binds small regulatory RNA (sRNAs) and mRNAs to facilitate mRNA translational regulation in response to envelope stress, environmental stress and changes in metabolite concentrations. Also binds with high specificity to tRNAs. The polypeptide is RNA-binding protein Hfq (Leptospira interrogans serogroup Icterohaemorrhagiae serovar copenhageni (strain Fiocruz L1-130)).